The following is a 361-amino-acid chain: Mannose-1-phosphate guanyltransferase (361 aa).

Belongs to the transferase hexapeptide repeat family.

It is found in the cytoplasm. The catalysed reaction is alpha-D-mannose 1-phosphate + GTP + H(+) = GDP-alpha-D-mannose + diphosphate. Its pathway is nucleotide-sugar biosynthesis; GDP-alpha-D-mannose biosynthesis; GDP-alpha-D-mannose from alpha-D-mannose 1-phosphate (GTP route): step 1/1. Its function is as follows. Involved in cell wall synthesis where it is required for glycosylation. Involved in cell cycle progression through cell-size checkpoint. The protein is Mannose-1-phosphate guanyltransferase (MPG1) of Kluyveromyces lactis (strain ATCC 8585 / CBS 2359 / DSM 70799 / NBRC 1267 / NRRL Y-1140 / WM37) (Yeast).